Consider the following 71-residue polypeptide: Protein DP71L (71 aa).

Important for host CHOP inhibition stretches follow at residues 16–18 and 57–61; these read VRF and LSAVL.

Belongs to the asfivirus DP71L family. In terms of assembly, interacts (via C-terminus) with host PPP1CB.

Interacts with the host phosphatase PP1 catalytic subunit (PPP1CB) and recruits it to dephosphorylate EIF2S1/eIF2alpha and therefore restores the host translation that has been shut-down by the host. Also inhibits the EIF2S1/eIF2alpha-ATF4-DDIT3/CHOP pathway. The polypeptide is Protein DP71L (Ornithodoros (relapsing fever ticks)).